A 62-amino-acid chain; its full sequence is UPF0370 protein ESA_00777 (62 aa).

Residues 4 to 24 (LGKYWWVLVLVFLLGVLLNVI) form a helical membrane-spanning segment. Over residues 36–51 (MDNRPELPPHRDFNDK) the composition is skewed to basic and acidic residues. The disordered stretch occupies residues 36-62 (MDNRPELPPHRDFNDKWDDEDDWPKKK). The segment covering 52–62 (WDDEDDWPKKK) has biased composition (acidic residues).

Belongs to the UPF0370 family.

Its subcellular location is the cell membrane. The sequence is that of UPF0370 protein ESA_00777 from Cronobacter sakazakii (strain ATCC BAA-894) (Enterobacter sakazakii).